We begin with the raw amino-acid sequence, 397 residues long: Dimethyladenosine transferase 2, mitochondrial (397 aa).

The transit peptide at 1–44 (MRGLAMRLPPRLALSVLAGRGPSCILGSGAATRKDWQERNRRSF) directs the protein to the mitochondrion. Residues Ile75, Glu124, and Asp150 each contribute to the S-adenosyl-L-methionine site. A DNA-binding region spans residues 329 to 330 (KR).

It belongs to the class I-like SAM-binding methyltransferase superfamily. rRNA adenine N(6)-methyltransferase family. KsgA subfamily. As to quaternary structure, homodimer. Component of the mitochondrial transcription initiation complex, composed at least of TFB2M, TFAM and POLRMT. In this complex TFAM recruits POLRMT to the promoter whereas TFB2M induces structural changes in POLRMT to enable promoter opening and trapping of the DNA non-template strand. Interacts with mitochondrial RNA polymerase POLRMT. Interacts with TFAM.

Its subcellular location is the mitochondrion. It catalyses the reaction adenosine in rRNA + S-adenosyl-L-methionine = N(6)-methyladenosine in rRNA + S-adenosyl-L-homocysteine + H(+). In terms of biological role, S-adenosyl-L-methionine-dependent rRNA methyltransferase which may methylate two specific adjacent adenosines in the loop of a conserved hairpin near the 3'-end of 12S mitochondrial rRNA. Component of the mitochondrial transcription initiation complex, composed at least of TFB2M, TFAM and POLRMT that is required for basal transcription of mitochondrial DNA. In this complex TFAM recruits POLRMT to a specific promoter whereas TFB2M induces structural changes in POLRMT to enable promoter opening and trapping of the DNA non-template strand. Stimulates transcription independently of the methyltransferase activity. The chain is Dimethyladenosine transferase 2, mitochondrial from Rattus norvegicus (Rat).